The primary structure comprises 177 residues: Large ribosomal subunit protein uL6 (177 aa).

The protein belongs to the universal ribosomal protein uL6 family. As to quaternary structure, part of the 50S ribosomal subunit.

Functionally, this protein binds to the 23S rRNA, and is important in its secondary structure. It is located near the subunit interface in the base of the L7/L12 stalk, and near the tRNA binding site of the peptidyltransferase center. This chain is Large ribosomal subunit protein uL6, found in Brucella canis (strain ATCC 23365 / NCTC 10854 / RM-666).